The following is a 362-amino-acid chain: Cobalt-precorrin-5B C(1)-methyltransferase (362 aa).

Belongs to the CbiD family.

The enzyme catalyses Co-precorrin-5B + S-adenosyl-L-methionine = Co-precorrin-6A + S-adenosyl-L-homocysteine. The protein operates within cofactor biosynthesis; adenosylcobalamin biosynthesis; cob(II)yrinate a,c-diamide from sirohydrochlorin (anaerobic route): step 6/10. Its function is as follows. Catalyzes the methylation of C-1 in cobalt-precorrin-5B to form cobalt-precorrin-6A. This chain is Cobalt-precorrin-5B C(1)-methyltransferase, found in Geotalea daltonii (strain DSM 22248 / JCM 15807 / FRC-32) (Geobacter daltonii).